The sequence spans 458 residues: tRNA modification GTPase MnmE (458 aa).

The (6S)-5-formyl-5,6,7,8-tetrahydrofolate site is built by Arg22, Glu84, and Arg123. One can recognise a TrmE-type G domain in the interval 220–379 (GIATAIIGRP…LETAIADLFF (160 aa)). Residue Asn230 participates in K(+) binding. GTP-binding positions include 230–235 (NVGKSS), 249–255 (TDIAGTT), and 274–277 (DTAG). Ser234 lines the Mg(2+) pocket. K(+) is bound by residues Thr249, Ile251, and Thr254. Position 255 (Thr255) interacts with Mg(2+). Lys458 provides a ligand contact to (6S)-5-formyl-5,6,7,8-tetrahydrofolate.

It belongs to the TRAFAC class TrmE-Era-EngA-EngB-Septin-like GTPase superfamily. TrmE GTPase family. In terms of assembly, homodimer. Heterotetramer of two MnmE and two MnmG subunits. Requires K(+) as cofactor.

Its subcellular location is the cytoplasm. Its function is as follows. Exhibits a very high intrinsic GTPase hydrolysis rate. Involved in the addition of a carboxymethylaminomethyl (cmnm) group at the wobble position (U34) of certain tRNAs, forming tRNA-cmnm(5)s(2)U34. This is tRNA modification GTPase MnmE from Bacillus cereus (strain ATCC 10987 / NRS 248).